The chain runs to 255 residues: Membrane protein insertase YidC 2 (255 aa).

The signal sequence occupies residues 1–20; the sequence is MKKKLGLLAMVVALMAITAG. The N-palmitoyl cysteine moiety is linked to residue Cys-21. The S-diacylglycerol cysteine moiety is linked to residue Cys-21. Transmembrane regions (helical) follow at residues 59 to 79, 129 to 149, 160 to 180, 202 to 222, and 223 to 243; these read YGLA…PLMI, LAGC…YHAI, FLWF…VAAI, MMLW…PAAL, and SLYW…IKGP.

Belongs to the OXA1/ALB3/YidC family. Type 2 subfamily.

The protein resides in the cell membrane. Functionally, required for the insertion and/or proper folding and/or complex formation of integral membrane proteins into the membrane. Involved in integration of membrane proteins that insert both dependently and independently of the Sec translocase complex, as well as at least some lipoproteins. This Bacillus anthracis protein is Membrane protein insertase YidC 2.